Reading from the N-terminus, the 229-residue chain is LexA repressor (229 aa).

Positions 28–48 (IREIGEALDIRSTNGVNDHLK) form a DNA-binding region, H-T-H motif. Catalysis depends on for autocatalytic cleavage activity residues Ser-147 and Lys-184.

It belongs to the peptidase S24 family. In terms of assembly, homodimer.

It catalyses the reaction Hydrolysis of Ala-|-Gly bond in repressor LexA.. Represses a number of genes involved in the response to DNA damage (SOS response), including recA and lexA. In the presence of single-stranded DNA, RecA interacts with LexA causing an autocatalytic cleavage which disrupts the DNA-binding part of LexA, leading to derepression of the SOS regulon and eventually DNA repair. This is LexA repressor from Anaeromyxobacter dehalogenans (strain 2CP-C).